The sequence spans 123 residues: Succinate dehydrogenase assembly factor 3, mitochondrial (123 aa).

The N-terminal 31 residues, 1 to 31 (MANPAHISAVRTLYKKILVLHRFLPIDLRAL), are a transit peptide targeting the mitochondrion.

It belongs to the complex I LYR family. SDHAF3 subfamily. Interacts with sdhb within an sdha-sdhb subcomplex.

Its subcellular location is the mitochondrion matrix. Functionally, plays an essential role in the assembly of succinate dehydrogenase (SDH), an enzyme complex (also referred to as respiratory complex II) that is a component of both the tricarboxylic acid (TCA) cycle and the mitochondrial electron transport chain, and which couples the oxidation of succinate to fumarate with the reduction of ubiquinone (coenzyme Q) to ubiquinol. Promotes maturation of the iron-sulfur protein subunit sdhb of the SDH catalytic dimer, protecting it from the deleterious effects of oxidants. May act together with SDHAF1. This is Succinate dehydrogenase assembly factor 3, mitochondrial from Danio rerio (Zebrafish).